The following is a 759-amino-acid chain: Subtilisin-like protease SBT3.10 (759 aa).

A signal peptide spans 1–25 (MSKTIILLAFFLSIVLNVQISFVVA). A propeptide spans 26 to 108 (ESKVYVVYLG…VIPNTLYEMT (83 aa)) (activation peptide). The Inhibitor I9 domain occupies 29–106 (VYVVYLGEKE…VQVIPNTLYE (78 aa)). In terms of domain architecture, Peptidase S8 spans 112 to 606 (TWDYLGVSPG…GGLINPEKAV (495 aa)). Residue Asp-142 is the Charge relay system of the active site. N-linked (GlcNAc...) asparagine glycosylation is found at Asn-175 and Asn-202. His-218 serves as the catalytic Charge relay system. 2 N-linked (GlcNAc...) asparagine glycosylation sites follow: Asn-233 and Asn-361. Residues 390-464 (DCEKLSANPK…ELGTDILFYI (75 aa)) enclose the PA domain. Ser-537 (charge relay system) is an active-site residue.

This sequence belongs to the peptidase S8 family.

The protein resides in the secreted. This is Subtilisin-like protease SBT3.10 from Arabidopsis thaliana (Mouse-ear cress).